Reading from the N-terminus, the 1623-residue chain is Histone-lysine N-methyltransferase set-9 (1623 aa).

Disordered regions lie at residues Met1–Gln102, Ala112–Glu131, Glu198–Ser227, Gln448–Pro600, and Thr645–Ala781. Residues His62–His71 are compositionally biased toward basic and acidic residues. The segment covering Glu77–Pro100 has biased composition (low complexity). A compositionally biased stretch (polar residues) spans Pro206–Ser227. Positions Met554–Pro573 are enriched in basic and acidic residues. A compositionally biased stretch (pro residues) spans Pro587–Val597. Over residues Thr645–Tyr669 the composition is skewed to polar residues. A compositionally biased stretch (basic residues) spans His723–Arg733. The span at Ser772–Ala781 shows a compositional bias: acidic residues. Residues Thr786–Arg834 form a PHD-type zinc finger. A disordered region spans residues Ala857–Arg895. Residues Lys873–Lys882 are compositionally biased toward polar residues. An SET domain is found at Met965–Asp1056. Composition is skewed to basic and acidic residues over residues Ala1089 to Glu1157 and Ala1172 to Arg1194. Disordered stretches follow at residues Ala1089 to Pro1318 and Leu1356 to Asn1623. Residues Arg1093–Ser1201 adopt a coiled-coil conformation. Residues Thr1242–Thr1252 show a composition bias toward polar residues. The segment covering Ala1282–Ala1293 has biased composition (low complexity). Positions Phe1364–Glu1401 form a coiled coil. 4 stretches are compositionally biased toward basic and acidic residues: residues Ser1365 to Lys1378, Lys1388 to Asn1406, Lys1413 to Pro1429, and Lys1447 to Ser1464. The segment covering Ser1533–Ala1544 has biased composition (polar residues).

Belongs to the class V-like SAM-binding methyltransferase superfamily. Predominantly expressed in the germline (at protein level).

It localises to the nucleus. It carries out the reaction L-lysyl-[histone] + S-adenosyl-L-methionine = N(6)-methyl-L-lysyl-[histone] + S-adenosyl-L-homocysteine + H(+). Functionally, histone methyltransferase. Might play a role in transcriptional regulation. Together with set-26, negatively regulates lifespan in a germline-independent, partially daf-16-dependent fashion. Together with set-26, plays a role in germline development and maintenance and might play a role in the restriction of the trimethylation mark on histone H3 'Lys-4'(H3K4me3) to target genes specifically in the germline. The sequence is that of Histone-lysine N-methyltransferase set-9 from Caenorhabditis elegans.